Reading from the N-terminus, the 279-residue chain is Oxygen-dependent coproporphyrinogen-III oxidase (279 aa).

Serine 102 is a binding site for substrate. A divalent metal cation-binding residues include histidine 106 and histidine 116. The active-site Proton donor is the histidine 116. Asparagine 118–arginine 120 is a substrate binding site. Residues histidine 149 and histidine 179 each contribute to the a divalent metal cation site. Positions tyrosine 244–asparagine 279 are important for dimerization.

Belongs to the aerobic coproporphyrinogen-III oxidase family. In terms of assembly, homodimer. A divalent metal cation is required as a cofactor.

The protein resides in the cytoplasm. It carries out the reaction coproporphyrinogen III + O2 + 2 H(+) = protoporphyrinogen IX + 2 CO2 + 2 H2O. The protein operates within porphyrin-containing compound metabolism; protoporphyrin-IX biosynthesis; protoporphyrinogen-IX from coproporphyrinogen-III (O2 route): step 1/1. In terms of biological role, involved in the heme biosynthesis. Catalyzes the aerobic oxidative decarboxylation of propionate groups of rings A and B of coproporphyrinogen-III to yield the vinyl groups in protoporphyrinogen-IX. The protein is Oxygen-dependent coproporphyrinogen-III oxidase of Rickettsia africae (strain ESF-5).